Consider the following 423-residue polypeptide: Growth hormone-releasing hormone receptor (423 aa).

An N-terminal signal peptide occupies residues 1-22 (MDGLMWATRILCLLSLCGVTLG). Topologically, residues 23–130 (HLHLECDFIT…KEKSYFSTVK (108 aa)) are extracellular. 3 cysteine pairs are disulfide-bonded: Cys-41–Cys-64, Cys-55–Cys-96, and Cys-78–Cys-112. N-linked (GlcNAc...) asparagine glycans are attached at residues Asn-49 and Asn-50. Residues 131–151 (IIYTTGHSISIVALCVAIAIL) traverse the membrane as a helical segment. Topologically, residues 152 to 167 (VALRRLHCPRNYIHTQ) are cytoplasmic. A helical transmembrane segment spans residues 168–188 (LFATFILKASAVFLKDAAIFQ). Topologically, residues 189–210 (GDSTDHCSMSTVLCKVSVAISH) are extracellular. Residues 211 to 231 (LATMTNFSWLLAEAVYLSCLL) traverse the membrane as a helical segment. The Cytoplasmic segment spans residues 232–240 (ASTSPRSKP). The chain crosses the membrane as a helical span at residues 241-261 (AFWWLVLAGWGLPVLCTGTWV). The Extracellular segment spans residues 262–283 (GCKLAFEDTECWDLDNSSPCWW). The helical transmembrane segment at 284-304 (IIKGPIVLSVGVNFGLFLNII) threads the bilayer. The Cytoplasmic portion of the chain corresponds to 305–331 (CILLRKLEPAQGGLHTRAQYWRLSKST). Residues 332 to 352 (LLLIPLFGIHYIIFNFLPDSA) traverse the membrane as a helical segment. Residues 353–357 (GLDIR) lie on the Extracellular side of the membrane. A helical membrane pass occupies residues 358 to 378 (VPLELGLGSFQGFIVAVLYCF). The Cytoplasmic portion of the chain corresponds to 379–423 (LNQEVRTEISRKWYGHDPELLPARRTCTEWTTPPRSRLKVLTSEC).

This sequence belongs to the G-protein coupled receptor 2 family. In terms of tissue distribution, pituitary gland.

The protein localises to the cell membrane. Functionally, receptor for GRF, coupled to G proteins which activate adenylyl cyclase. Stimulates somatotroph cell growth, growth hormone gene transcription and growth hormone secretion. The sequence is that of Growth hormone-releasing hormone receptor (Ghrhr) from Mus musculus (Mouse).